The primary structure comprises 487 residues: Cysteine--tRNA ligase (487 aa).

Cysteine 29 provides a ligand contact to Zn(2+). A 'HIGH' region motif is present at residues 31-41 (VTVYDVNHVGH). Residues cysteine 209, histidine 234, and glutamate 238 each coordinate Zn(2+). The 'KMSKS' region motif lies at 266–270 (KMSKS). Lysine 269 contacts ATP.

The protein belongs to the class-I aminoacyl-tRNA synthetase family. In terms of assembly, monomer. It depends on Zn(2+) as a cofactor.

The protein localises to the cytoplasm. The enzyme catalyses tRNA(Cys) + L-cysteine + ATP = L-cysteinyl-tRNA(Cys) + AMP + diphosphate. In Persephonella marina (strain DSM 14350 / EX-H1), this protein is Cysteine--tRNA ligase.